We begin with the raw amino-acid sequence, 126 residues long: uncharacterized protein (126 aa).

A disordered region spans residues 1 to 101 (MQASSEPANV…KSVGSQSADE (101 aa)). Composition is skewed to polar residues over residues 14 to 27 (GQNQ…STSP) and 86 to 99 (DTEA…SQSA).

This is an uncharacterized protein from Schizosaccharomyces pombe (strain 972 / ATCC 24843) (Fission yeast).